Reading from the N-terminus, the 252-residue chain is Ubiquinone/menaquinone biosynthesis C-methyltransferase UbiE (252 aa).

S-adenosyl-L-methionine-binding positions include T75, D96, and 123-124; that span reads NA.

It belongs to the class I-like SAM-binding methyltransferase superfamily. MenG/UbiE family.

It catalyses the reaction a 2-demethylmenaquinol + S-adenosyl-L-methionine = a menaquinol + S-adenosyl-L-homocysteine + H(+). The catalysed reaction is a 2-methoxy-6-(all-trans-polyprenyl)benzene-1,4-diol + S-adenosyl-L-methionine = a 5-methoxy-2-methyl-3-(all-trans-polyprenyl)benzene-1,4-diol + S-adenosyl-L-homocysteine + H(+). The protein operates within quinol/quinone metabolism; menaquinone biosynthesis; menaquinol from 1,4-dihydroxy-2-naphthoate: step 2/2. It participates in cofactor biosynthesis; ubiquinone biosynthesis. In terms of biological role, methyltransferase required for the conversion of demethylmenaquinol (DMKH2) to menaquinol (MKH2) and the conversion of 2-polyprenyl-6-methoxy-1,4-benzoquinol (DDMQH2) to 2-polyprenyl-3-methyl-6-methoxy-1,4-benzoquinol (DMQH2). The polypeptide is Ubiquinone/menaquinone biosynthesis C-methyltransferase UbiE (Methylobacterium nodulans (strain LMG 21967 / CNCM I-2342 / ORS 2060)).